We begin with the raw amino-acid sequence, 144 residues long: Peptide methionine sulfoxide reductase MsrB (144 aa).

Positions 5–128 (KEELRQRIGE…NSAALQFIPV (124 aa)) constitute a MsrB domain. The active-site Nucleophile is the cysteine 117.

Belongs to the MsrB Met sulfoxide reductase family.

The catalysed reaction is L-methionyl-[protein] + [thioredoxin]-disulfide + H2O = L-methionyl-(R)-S-oxide-[protein] + [thioredoxin]-dithiol. The protein is Peptide methionine sulfoxide reductase MsrB of Ligilactobacillus salivarius (strain UCC118) (Lactobacillus salivarius).